A 99-amino-acid polypeptide reads, in one-letter code: Teretoxin Tsu6.4 (99 aa).

Positions 1 to 21 are cleaved as a signal peptide; that stretch reads MRLLLILVLLTPVIVAFSVDE. Positions 22 to 53 are excised as a propeptide; the sequence is ELNNADGANAASFTADQEVRHKRNLFPAIARR.

Contains 3 disulfide bonds. In terms of tissue distribution, expressed by the venom duct.

It localises to the secreted. The sequence is that of Teretoxin Tsu6.4 from Terebra subulata (Chocolate spotted auger).